A 161-amino-acid polypeptide reads, in one-letter code: 6,7-dimethyl-8-ribityllumazine synthase (161 aa).

5-amino-6-(D-ribitylamino)uracil is bound by residues Trp-26, 58 to 60, and 81 to 83; these read AFE and VVI. 86-87 contributes to the (2S)-2-hydroxy-3-oxobutyl phosphate binding site; sequence GT. Residue His-89 is the Proton donor of the active site. Phe-114 provides a ligand contact to 5-amino-6-(D-ribitylamino)uracil. Arg-128 contacts (2S)-2-hydroxy-3-oxobutyl phosphate.

Belongs to the DMRL synthase family.

It catalyses the reaction (2S)-2-hydroxy-3-oxobutyl phosphate + 5-amino-6-(D-ribitylamino)uracil = 6,7-dimethyl-8-(1-D-ribityl)lumazine + phosphate + 2 H2O + H(+). Its pathway is cofactor biosynthesis; riboflavin biosynthesis; riboflavin from 2-hydroxy-3-oxobutyl phosphate and 5-amino-6-(D-ribitylamino)uracil: step 1/2. In terms of biological role, catalyzes the formation of 6,7-dimethyl-8-ribityllumazine by condensation of 5-amino-6-(D-ribitylamino)uracil with 3,4-dihydroxy-2-butanone 4-phosphate. This is the penultimate step in the biosynthesis of riboflavin. The chain is 6,7-dimethyl-8-ribityllumazine synthase from Nocardioides sp. (strain ATCC BAA-499 / JS614).